The sequence spans 417 residues: Serine hydroxymethyltransferase 2 (417 aa).

Residues Leu-121 and 125 to 127 contribute to the (6S)-5,6,7,8-tetrahydrofolate site; that span reads GHL. Lys-229 bears the N6-(pyridoxal phosphate)lysine mark. 354-356 contributes to the (6S)-5,6,7,8-tetrahydrofolate binding site; that stretch reads SPF.

The protein belongs to the SHMT family. As to quaternary structure, homodimer. Requires pyridoxal 5'-phosphate as cofactor.

Its subcellular location is the cytoplasm. The catalysed reaction is (6R)-5,10-methylene-5,6,7,8-tetrahydrofolate + glycine + H2O = (6S)-5,6,7,8-tetrahydrofolate + L-serine. The protein operates within one-carbon metabolism; tetrahydrofolate interconversion. Its pathway is amino-acid biosynthesis; glycine biosynthesis; glycine from L-serine: step 1/1. Functionally, catalyzes the reversible interconversion of serine and glycine with tetrahydrofolate (THF) serving as the one-carbon carrier. This reaction serves as the major source of one-carbon groups required for the biosynthesis of purines, thymidylate, methionine, and other important biomolecules. Also exhibits THF-independent aldolase activity toward beta-hydroxyamino acids, producing glycine and aldehydes, via a retro-aldol mechanism. The polypeptide is Serine hydroxymethyltransferase 2 (Pseudomonas putida (strain ATCC 47054 / DSM 6125 / CFBP 8728 / NCIMB 11950 / KT2440)).